Here is a 170-residue protein sequence, read N- to C-terminus: MPLLDSFRVDHTRMDAPAVRVAKSMSTPKGDDITVFDLRFCVPNEEILSEKGIHTLEHLFAGFMRDHLNSNNVEIIDISPMGCRTGFYMSLIGTPSEETVAASWKAAMEDVLKVKAKSDIPELNEYQCGTYEMHSLEEAQEIAKMILDRDVKVNSNEELYLSEEFLKEHS.

3 residues coordinate Fe cation: H54, H58, and C128.

It belongs to the LuxS family. As to quaternary structure, homodimer. Fe cation serves as cofactor.

The enzyme catalyses S-(5-deoxy-D-ribos-5-yl)-L-homocysteine = (S)-4,5-dihydroxypentane-2,3-dione + L-homocysteine. Functionally, involved in the synthesis of autoinducer 2 (AI-2) which is secreted by bacteria and is used to communicate both the cell density and the metabolic potential of the environment. The regulation of gene expression in response to changes in cell density is called quorum sensing. Catalyzes the transformation of S-ribosylhomocysteine (RHC) to homocysteine (HC) and 4,5-dihydroxy-2,3-pentadione (DPD). In Marinomonas sp. (strain MWYL1), this protein is S-ribosylhomocysteine lyase.